Here is a 520-residue protein sequence, read N- to C-terminus: Laccase (520 aa).

An N-terminal signal peptide occupies residues 1-21; sequence MHTFLRSTALVVAGLSARALA. Plastocyanin-like domains are found at residues 22 to 148 and 160 to 304; these read SIGP…FVVY and VDDD…ILRY. N-linked (GlcNAc...) asparagine glycosylation is present at asparagine 75. The Cu cation site is built by histidine 85, histidine 87, histidine 130, and histidine 132. Intrachain disulfides connect cysteine 106/cysteine 509 and cysteine 138/cysteine 227. Asparagine 352 and asparagine 402 each carry an N-linked (GlcNAc...) asparagine glycan. The Plastocyanin-like 3 domain maps to 373–496; it reads TVPVLLQILS…VFAEDIPDVA (124 aa). 7 residues coordinate Cu cation: histidine 418, histidine 421, histidine 423, histidine 473, cysteine 474, histidine 475, and histidine 479.

Belongs to the multicopper oxidase family. Cu cation is required as a cofactor.

It localises to the secreted. It catalyses the reaction 4 hydroquinone + O2 = 4 benzosemiquinone + 2 H2O. In terms of biological role, lignin degradation and detoxification of lignin-derived products. In Phlebia radiata (White-rot fungus), this protein is Laccase (LAC).